Consider the following 307-residue polypeptide: Auxin-induced protein PCNT115 (307 aa).

Tyrosine 64 (proton donor) is an active-site residue. Residue histidine 136 participates in substrate binding. Residue 215–225 (SPLGRGFLSSG) coordinates NADP(+).

Belongs to the aldo/keto reductase family. Aldo/keto reductase 2 subfamily.

This chain is Auxin-induced protein PCNT115, found in Nicotiana tabacum (Common tobacco).